Here is a 122-residue protein sequence, read N- to C-terminus: Large ribosomal subunit protein uL14 (122 aa).

The protein belongs to the universal ribosomal protein uL14 family. In terms of assembly, part of the 50S ribosomal subunit. Forms a cluster with proteins L3 and L19. In the 70S ribosome, L14 and L19 interact and together make contacts with the 16S rRNA in bridges B5 and B8.

Functionally, binds to 23S rRNA. Forms part of two intersubunit bridges in the 70S ribosome. This chain is Large ribosomal subunit protein uL14, found in Shewanella amazonensis (strain ATCC BAA-1098 / SB2B).